A 947-amino-acid polypeptide reads, in one-letter code: Valine--tRNA ligase (947 aa).

Positions 45-55 (PNVTGSLHMGH) match the 'HIGH' region motif. A 'KMSKS' region motif is present at residues 591–595 (KMSKS). Lys594 contributes to the ATP binding site. A coiled-coil region spans residues 879–943 (DLAAEQARLE…ASLRTALTRV (65 aa)).

Belongs to the class-I aminoacyl-tRNA synthetase family. ValS type 1 subfamily. In terms of assembly, monomer.

The protein resides in the cytoplasm. The enzyme catalyses tRNA(Val) + L-valine + ATP = L-valyl-tRNA(Val) + AMP + diphosphate. Its function is as follows. Catalyzes the attachment of valine to tRNA(Val). As ValRS can inadvertently accommodate and process structurally similar amino acids such as threonine, to avoid such errors, it has a 'posttransfer' editing activity that hydrolyzes mischarged Thr-tRNA(Val) in a tRNA-dependent manner. This Agrobacterium fabrum (strain C58 / ATCC 33970) (Agrobacterium tumefaciens (strain C58)) protein is Valine--tRNA ligase.